The following is a 457-amino-acid chain: Dolichol phosphate-mannose mannosyltransferase (457 aa).

Topologically, residues 1 to 12 are cytoplasmic; it reads MKRLAKAAFSQN. Residues 13-33 traverse the membrane as a helical segment; it reads SLTAPIVSTFVYLISVVRVVL. Over 34-91 the chain is Extracellular; that stretch reads NGNWPVTSSDTAMFQHIGWMVFSGKRYYIDAWDPKPPLTLELATIIAYISNGDPHLQH. Residues 92–112 form a helical membrane-spanning segment; that stretch reads TLSVVSTIVAGILLTYLISHI. At 113 to 120 the chain is on the cytoplasmic side; sequence TSEITGNQ. The helical transmembrane segment at 121–141 threads the bilayer; it reads FAGLLSGIVFITFPVIHYSAV. The Extracellular segment spans residues 142–173; sequence FGYEPKYFVFLFGLGSIYLSRNPKPILSGAAA. Residues 174–194 form a helical membrane-spanning segment; it reads AASAGMWQFAIIFPIISFGII. Residues 195 to 211 lie on the Cytoplasmic side of the membrane; the sequence is SRRKSKDLILKYVFGAT. The chain crosses the membrane as a helical span at residues 212 to 232; the sequence is IIAFISLLPIYLQGGLVAMTV. Over 233–259 the chain is Extracellular; it reads EVIIAPLYAGETQSFLYRLVKGVTHLK. A helical transmembrane segment spans residues 260–280; that stretch reads LMIPIALLGMAGILLGFLDDI. Topologically, residues 281 to 283 are cytoplasmic; that stretch reads RER. A helical transmembrane segment spans residues 284–304; the sequence is WWVVGLLLWFCIQIFILDYDG. Over 305–307 the chain is Extracellular; the sequence is ADD. Residues 308-328 form a helical membrane-spanning segment; sequence LFLGIILVSMGIGFAFEKLST. Topologically, residues 329–337 are cytoplasmic; it reads KYESERINS. The chain crosses the membrane as a helical span at residues 338–358; sequence IVTAVVVCMLIWQVVTLGGVG. Residues 359 to 457 lie on the Extracellular side of the membrane; the sequence is VITNPYSYSG…EEKCGKWRLP (99 aa).

The protein resides in the cell membrane. It participates in cell surface structure biogenesis; S-layer biogenesis. The protein operates within protein modification; protein glycosylation. Its function is as follows. Involved in the assembly of a N-linked pentasaccharide that decorates the S-layer glycoprotein and flagellins. Transfers mannose, the terminal pentasaccharide residue, from its dedicated dolichol phosphate carrier to the protein-bound glycan comprising the first four subunits of the N-linked pentasaccharide. The chain is Dolichol phosphate-mannose mannosyltransferase (aglS) from Haloferax volcanii (strain ATCC 29605 / DSM 3757 / JCM 8879 / NBRC 14742 / NCIMB 2012 / VKM B-1768 / DS2) (Halobacterium volcanii).